A 690-amino-acid polypeptide reads, in one-letter code: Methionine--tRNA ligase (690 aa).

Residues 12-22 (PYANGSIHLGH) carry the 'HIGH' region motif. Residues Cys-143, Cys-146, Cys-156, and Cys-159 each coordinate Zn(2+). The short motif at 328 to 332 (KMSKS) is the 'KMSKS' region element. Residue Lys-331 coordinates ATP. The tRNA-binding domain occupies 582–690 (DFAKVDLRIA…SGAEPGMKVK (109 aa)).

This sequence belongs to the class-I aminoacyl-tRNA synthetase family. MetG type 1 subfamily. In terms of assembly, homodimer. Zn(2+) is required as a cofactor.

Its subcellular location is the cytoplasm. The enzyme catalyses tRNA(Met) + L-methionine + ATP = L-methionyl-tRNA(Met) + AMP + diphosphate. Functionally, is required not only for elongation of protein synthesis but also for the initiation of all mRNA translation through initiator tRNA(fMet) aminoacylation. The polypeptide is Methionine--tRNA ligase (Thiobacillus denitrificans (strain ATCC 25259 / T1)).